The chain runs to 125 residues: NADH-ubiquinone oxidoreductase chain 1 (125 aa).

The next 3 helical transmembrane spans lie at 5–25, 74–94, and 105–125; these read IFAFFELITFLVPVLLAVAFL, YLFFASPVLFLTLALLLWNFM, and LSLLLVLGLSSLSVYAILGSG.

The protein belongs to the complex I subunit 1 family.

The protein resides in the mitochondrion inner membrane. It catalyses the reaction a ubiquinone + NADH + 5 H(+)(in) = a ubiquinol + NAD(+) + 4 H(+)(out). Functionally, core subunit of the mitochondrial membrane respiratory chain NADH dehydrogenase (Complex I) that is believed to belong to the minimal assembly required for catalysis. Complex I functions in the transfer of electrons from NADH to the respiratory chain. The immediate electron acceptor for the enzyme is believed to be ubiquinone. In Arbacia lixula (Black urchin), this protein is NADH-ubiquinone oxidoreductase chain 1 (ND1).